Reading from the N-terminus, the 127-residue chain is Translation initiation factor 5A (127 aa).

At K35 the chain carries Hypusine.

The protein belongs to the eIF-5A family.

The protein resides in the cytoplasm. Its function is as follows. Functions by promoting the formation of the first peptide bond. In Methanococcoides burtonii (strain DSM 6242 / NBRC 107633 / OCM 468 / ACE-M), this protein is Translation initiation factor 5A.